The sequence spans 62 residues: Sperm protamine P1 (62 aa).

Positions methionine 1–tyrosine 62 are disordered.

This sequence belongs to the protamine P1 family. As to expression, testis.

It is found in the nucleus. It localises to the chromosome. In terms of biological role, protamines substitute for histones in the chromatin of sperm during the haploid phase of spermatogenesis. They compact sperm DNA into a highly condensed, stable and inactive complex. This chain is Sperm protamine P1 (PRM1), found in Dendrolagus dorianus (Doria's tree-kangaroo).